A 123-amino-acid polypeptide reads, in one-letter code: Large ribosomal subunit protein uL14 (123 aa).

The protein belongs to the universal ribosomal protein uL14 family. As to quaternary structure, part of the 50S ribosomal subunit. Forms a cluster with proteins L3 and L19. In the 70S ribosome, L14 and L19 interact and together make contacts with the 16S rRNA in bridges B5 and B8.

Binds to 23S rRNA. Forms part of two intersubunit bridges in the 70S ribosome. In Wigglesworthia glossinidia brevipalpis, this protein is Large ribosomal subunit protein uL14.